We begin with the raw amino-acid sequence, 178 residues long: PEST proteolytic signal-containing nuclear protein (178 aa).

A compositionally biased stretch (basic and acidic residues) spans 1-15 (MADGKAGEEKPEKPQ). The segment at 1 to 82 (MADGKAGEEK…FAIGSQTARK (82 aa)) is disordered. The residue at position 2 (Ala-2) is an N-acetylalanine. Positions 37-47 (SSSNGGESSSR) are enriched in low complexity. Ser-53 carries the post-translational modification Phosphoserine. Residue Lys-64 is modified to N6-acetyllysine. A phosphoserine mark is found at Ser-77, Ser-87, and Ser-119. The disordered stretch occupies residues 134 to 158 (NIGRDTPTSAGPNSFNKGKHGFSDN). Phosphothreonine is present on Thr-139. The segment covering 139–149 (TPTSAGPNSFN) has biased composition (polar residues). Ser-147 carries the post-translational modification Phosphoserine. N6-acetyllysine occurs at positions 150 and 152.

In terms of assembly, interacts with UHRF2/NIRF. In terms of processing, ubiquitinated; mediated by UHRF2 and leading to its subsequent proteasomal degradation. N-terminally acetylated in a HYPK-dependent manner by the NatA acetyltransferase complex which is composed of NAA10 and NAA15.

The protein resides in the nucleus. In terms of biological role, may be involved in cell cycle regulation. The sequence is that of PEST proteolytic signal-containing nuclear protein (Pcnp) from Mus musculus (Mouse).